The primary structure comprises 79 residues: Small ribosomal subunit protein uS17 (79 aa).

This sequence belongs to the universal ribosomal protein uS17 family. As to quaternary structure, part of the 30S ribosomal subunit.

Its function is as follows. One of the primary rRNA binding proteins, it binds specifically to the 5'-end of 16S ribosomal RNA. This chain is Small ribosomal subunit protein uS17, found in Mesorhizobium japonicum (strain LMG 29417 / CECT 9101 / MAFF 303099) (Mesorhizobium loti (strain MAFF 303099)).